The following is a 541-amino-acid chain: MAKQIKYGEEARRALERGVNAVADTVKVTLGPRGRNVVLDKKYGSPTVTNDGVTIAREIELEDPFENQGAQLLKEAATKTNDIAGDGTTTATLLAQAMVREGLKNLAAGANPMLLRRGIAKAVDAAVEGLKRISKPIDNKESIAHVASISAADEEIGKLIAEAMDKVGKDGVITVEESKTLGTTLEVVEGMQFDRGYISPYMVTDAEKMEAVLEEPVILITDKKISNIQDLLPLLEQIVQQGKKLLIIADDVEGEALATLIVNKLRGTFTCVAVKAPGFGDRRKEMLQDIAILTGGQVISEELGYDLKDVRLDMLGRARQVKVTKEYTTIVGGAGDPSEIKKRVNQIKAQIEETTSDYDREKLQERLAKLAGGVAVIQAGAATETELKEKKHRIEDALAATKAAVEEGIVPGGGIALLNVIEDVQKVVDSLEGDFKTGAKIVLRALEEPVRQIATNAGVDGSVIVEKIKAAKDPNFGYDAYKEEFTDMFKAGIVDPTKVTRTALQNAASIASMILTTEAIVVDIPEKNTGMPNPGAGMDMM.

ATP-binding positions include 29–32, 86–90, glycine 413, and aspartate 495; these read TLGP and DGTTT.

Forms a cylinder of 14 subunits composed of two heptameric rings stacked back-to-back. Interacts with the co-chaperonin GroES.

The protein localises to the cytoplasm. It catalyses the reaction ATP + H2O + a folded polypeptide = ADP + phosphate + an unfolded polypeptide.. Functionally, together with its co-chaperonin GroES, plays an essential role in assisting protein folding. The GroEL-GroES system forms a nano-cage that allows encapsulation of the non-native substrate proteins and provides a physical environment optimized to promote and accelerate protein folding. This is Chaperonin GroEL from Thermoanaerobacter brockii (Thermoanaerobium brockii).